A 159-amino-acid polypeptide reads, in one-letter code: Succinate dehydrogenase [ubiquinone] cytochrome b small subunit, mitochondrial (159 aa).

The transit peptide at M1–H56 directs the protein to the mitochondrion. Over S57 to S63 the chain is Mitochondrial matrix. A helical membrane pass occupies residues L64–L85. Over N86 to V90 the chain is Mitochondrial intermembrane. A helical transmembrane segment spans residues V91–V111. H102 lines the heme b pocket. Residues T112–L120 are Mitochondrial matrix-facing. An a ubiquinone-binding site is contributed by Y114. A helical membrane pass occupies residues P121–F142. Topologically, residues N143–L159 are mitochondrial intermembrane.

Belongs to the CybS family. Component of complex II composed of four subunits: the flavoprotein (FP) SDHA, iron-sulfur protein (IP) SDHB, and a cytochrome b560 composed of SDHC and SDHD.

The protein localises to the mitochondrion inner membrane. Its pathway is carbohydrate metabolism; tricarboxylic acid cycle. Its function is as follows. Membrane-anchoring subunit of succinate dehydrogenase (SDH) that is involved in complex II of the mitochondrial electron transport chain and is responsible for transferring electrons from succinate to ubiquinone (coenzyme Q). SDH also oxidizes malate to the non-canonical enol form of oxaloacetate, enol-oxaloacetate. Enol-oxaloacetate, which is a potent inhibitor of the succinate dehydrogenase activity, is further isomerized into keto-oxaloacetate. The chain is Succinate dehydrogenase [ubiquinone] cytochrome b small subunit, mitochondrial (Sdhd) from Mus musculus (Mouse).